The chain runs to 107 residues: Putative ATP synthase subunit f, mitochondrial (107 aa).

It belongs to the ATPase F chain family. F-type ATPases have 2 components, CF(1) - the catalytic core - and CF(0) - the membrane proton channel. CF(0) seems to have nine subunits: a, b, c, d, e, f, g, F6 and 8 (or A6L).

It localises to the mitochondrion membrane. Functionally, mitochondrial membrane ATP synthase (F(1)F(0) ATP synthase or Complex V) produces ATP from ADP in the presence of a proton gradient across the membrane which is generated by electron transport complexes of the respiratory chain. F-type ATPases consist of two structural domains, F(1) - containing the extramembraneous catalytic core and F(0) - containing the membrane proton channel, linked together by a central stalk and a peripheral stalk. During catalysis, ATP synthesis in the catalytic domain of F(1) is coupled via a rotary mechanism of the central stalk subunits to proton translocation. Part of the complex F(0) domain. Minor subunit located with subunit a in the membrane. This chain is Putative ATP synthase subunit f, mitochondrial, found in Drosophila melanogaster (Fruit fly).